Here is a 210-residue protein sequence, read N- to C-terminus: MKKGILGKKHGMTQIFDEKGEVIPVTVIEAGPCVVVQKKTVEKDGYNAIQVGFGDVSEKKLNKPLLGHFKKAGVSPKRYLREFRLDDISGYEVGTEIKVDIFKPGDRVDVTGISKGKGFAGVIKRYGARRGPMSHGSKYHRRVGSMGATTDPGRTFKGKKMPGRMGSDRVTIQNLEVVKVDPELNLLVVKGSVPGPKGSLLIIRDSVKSK.

A disordered region spans residues 131–165 (GPMSHGSKYHRRVGSMGATTDPGRTFKGKKMPGRM).

The protein belongs to the universal ribosomal protein uL3 family. As to quaternary structure, part of the 50S ribosomal subunit. Forms a cluster with proteins L14 and L19.

One of the primary rRNA binding proteins, it binds directly near the 3'-end of the 23S rRNA, where it nucleates assembly of the 50S subunit. This Caldanaerobacter subterraneus subsp. tengcongensis (strain DSM 15242 / JCM 11007 / NBRC 100824 / MB4) (Thermoanaerobacter tengcongensis) protein is Large ribosomal subunit protein uL3.